Here is a 388-residue protein sequence, read N- to C-terminus: Na(+)/H(+) antiporter NhaA (388 aa).

The next 11 helical transmembrane spans lie at 8-28, 57-77, 93-113, 123-143, 152-172, 175-195, 210-230, 254-274, 278-298, 328-348, and 361-381; these read FFSAASGGAIILLLSALLGLL, LAEFISIAPMSLFFFVVIAEI, ILPLISALGGMMIPACLYGLI, GWAIPIATDAAFTLPIILALG, VWLMALAIFDDLLGIVVIALF, SHLNGYALFAAGLITAVMIGL, GVVLWWALLVSGLHPTIAGVI, IIAPWVTWLILPLFGFVSMGM, AMSFHVLLAPVPLGVALGLFL, LFGLSLLCGIGFTISLFIAEL, and YGILMGSLLSALAGWLWLRFL.

Belongs to the NhaA Na(+)/H(+) (TC 2.A.33) antiporter family.

The protein resides in the cell inner membrane. The enzyme catalyses Na(+)(in) + 2 H(+)(out) = Na(+)(out) + 2 H(+)(in). Its function is as follows. Na(+)/H(+) antiporter that extrudes sodium in exchange for external protons. The chain is Na(+)/H(+) antiporter NhaA from Zymomonas mobilis subsp. mobilis (strain ATCC 31821 / ZM4 / CP4).